The primary structure comprises 292 residues: Early E4 34 kDa protein (292 aa).

It belongs to the adenoviridae E4 30 to 34 kDa protein family. Interacts with E1B-55k.

It is found in the host nucleus. The protein resides in the host cytoplasm. Functionally, plays a major role to prevent cellular inhibition of viral genome replication by nuclear bodies. Assembles an SCF-like E3 ubiquitin ligase complex based on the cellular proteins ELOB, ELOC, CUL5 and RBX1, in cooperation with viral E1B-55K. This viral RING-type ligase ubiquitinates cellular substrates prior to proteasomal degradation: p53/TP53, LIG4, MRE11-RAD50-NBS1 (MRN) complex, ITGA3, DAXX and BLM. The chain is Early E4 34 kDa protein from Human adenovirus D serotype 9 (HAdV-9).